We begin with the raw amino-acid sequence, 479 residues long: ATP synthase subunit beta (479 aa).

Residue 168-175 (GGAGVGKT) coordinates ATP.

This sequence belongs to the ATPase alpha/beta chains family. F-type ATPases have 2 components, CF(1) - the catalytic core - and CF(0) - the membrane proton channel. CF(1) has five subunits: alpha(3), beta(3), gamma(1), delta(1), epsilon(1). CF(0) has three main subunits: a(1), b(2) and c(9-12). The alpha and beta chains form an alternating ring which encloses part of the gamma chain. CF(1) is attached to CF(0) by a central stalk formed by the gamma and epsilon chains, while a peripheral stalk is formed by the delta and b chains.

The protein resides in the cell membrane. The catalysed reaction is ATP + H2O + 4 H(+)(in) = ADP + phosphate + 5 H(+)(out). Functionally, produces ATP from ADP in the presence of a proton gradient across the membrane. The catalytic sites are hosted primarily by the beta subunits. The chain is ATP synthase subunit beta from Parafrankia sp. (strain EAN1pec).